The chain runs to 445 residues: von Willebrand factor A domain-containing protein 1 (445 aa).

Residues 1–22 (MLPWTALGLALSLRLALARSGA) form the signal peptide. The 180-residue stretch at 34-213 (DLMFLLDSSA…ELRGSILDAM (180 aa)) folds into the VWFA domain. Residues serine 74 and serine 80 each carry the phosphoserine; by FAM20C modification. The residue at position 83 (tyrosine 83) is a Phosphotyrosine. Residue serine 93 is modified to Phosphoserine; by FAM20C. One can recognise a Fibronectin type-III 1 domain in the interval 214–304 (RPQQLHATEI…QILRVRTRPG (91 aa)). Asparagine 264 is a glycosylation site (N-linked (GlcNAc...) asparagine). 2 disordered regions span residues 302–325 (RPGEAGPGASGPESGAGPAPTQLA) and 411–445 (RESALSAKACTPDGPRPRPRPVPRAPTPGTASREP). Over residues 311–325 (SGPESGAGPAPTQLA) the composition is skewed to low complexity. In terms of domain architecture, Fibronectin type-III 2 spans 334–427 (GPERIVISHA…KACTPDGPRP (94 aa)).

In terms of assembly, homodimer or homomultimer; disulfide-linked. Interacts with HSPG2. Post-translationally, N-glycosylated.

The protein localises to the secreted. It is found in the extracellular space. The protein resides in the extracellular matrix. Its subcellular location is the basement membrane. Promotes matrix assembly. Involved in the organization of skeletal muscles and in the formation of neuromuscular junctions. This chain is von Willebrand factor A domain-containing protein 1, found in Homo sapiens (Human).